The chain runs to 507 residues: Sulfatase (507 aa).

The first 18 residues, 1–18 (MKTRYFLLLGICMLSCRT), serve as a signal peptide directing secretion. The Ca(2+) site is built by D39, D40, and C79. The Nucleophile role is filled by C79. The residue at position 79 (C79) is a 3-oxoalanine (Cys). Residue H139 is part of the active site. Ca(2+)-binding residues include D325 and H326.

It belongs to the sulfatase family. Requires Ca(2+) as cofactor. In terms of processing, the conversion to 3-oxoalanine (also known as C-formylglycine, FGly), of a serine or cysteine residue in prokaryotes and of a cysteine residue in eukaryotes, is critical for catalytic activity. This post-translational modification is severely defective in multiple sulfatase deficiency (MSD).

The protein resides in the periplasm. In terms of biological role, sulfatase that may be involved in ulvan degradation. Ulvan is the main polysaccharide component of the Ulvales (green seaweed) cell wall. It is composed of disaccharide building blocks comprising 3-sulfated rhamnose (Rha3S) linked to D-glucuronic acid (GlcA), L-iduronic acid (IduA), or D-xylose (Xyl). Has no activity on different ulvan polymers. The protein is Sulfatase of Formosa agariphila (strain DSM 15362 / KCTC 12365 / LMG 23005 / KMM 3901 / M-2Alg 35-1).